Reading from the N-terminus, the 358-residue chain is Type II restriction enzyme HpaII (358 aa).

Homodimer.

The catalysed reaction is Endonucleolytic cleavage of DNA to give specific double-stranded fragments with terminal 5'-phosphates.. Its function is as follows. An E and P subtype restriction enzyme that recognizes the double-stranded sequence 5'-CCGG-3' and cleaves after C-1. The chain is Type II restriction enzyme HpaII from Haemophilus parainfluenzae.